The chain runs to 33 residues: Cytochrome b6-f complex subunit 8 (33 aa).

A helical transmembrane segment spans residues 2 to 22; sequence IFTLGWASLAAIFTFSIAMVV.

It belongs to the PetN family. As to quaternary structure, the 4 large subunits of the cytochrome b6-f complex are cytochrome b6, subunit IV (17 kDa polypeptide, PetD), cytochrome f and the Rieske protein, while the 4 small subunits are PetG, PetL, PetM and PetN. The complex functions as a dimer.

The protein resides in the cellular thylakoid membrane. In terms of biological role, component of the cytochrome b6-f complex, which mediates electron transfer between photosystem II (PSII) and photosystem I (PSI), cyclic electron flow around PSI, and state transitions. This is Cytochrome b6-f complex subunit 8 from Prochlorococcus marinus (strain NATL2A).